We begin with the raw amino-acid sequence, 174 residues long: MNMLVINGTPRKHGRTRIAASYIAALYHTDLIDLSEFVLPVFNGEAEQSELLKVQELKQRVTKADAIVLLSPEYHSGMSGALKNALDFLSSEQFKYKPVALLAVAGGGKGGINALNNMRTVMRGVYANVIPKQLVLDPVHIDVENATVAENIKESIKELVEELSMFAKAGNPGV.

FMN is bound by residues 9–11 (TPR), 15–16 (RT), 73–76 (EYHS), and Gly-106.

The protein belongs to the azoreductase type 2 family. In terms of assembly, homotetramer. It depends on FMN as a cofactor.

Functionally, catalyzes the reductive cleavage of azo bond in aromatic azo compounds to the corresponding amines. Requires NADPH, but not NADH, as an electron donor for its activity. The chain is FMN-dependent NADPH-azoreductase (azr) from Bacillus subtilis (strain 168).